The following is a 238-amino-acid chain: Epoxyqueuosine reductase QueH (238 aa).

4 residues coordinate [4Fe-4S] cluster: Cys43, Cys44, Cys129, and Cys132. Cys211 and Cys213 are disulfide-bonded.

This sequence belongs to the QueH family.

It catalyses the reaction epoxyqueuosine(34) in tRNA + AH2 = queuosine(34) in tRNA + A + H2O. The protein operates within tRNA modification; tRNA-queuosine biosynthesis. Catalyzes the conversion of epoxyqueuosine (oQ) to queuosine (Q), which is a hypermodified base found in the wobble positions of tRNA(Asp), tRNA(Asn), tRNA(His) and tRNA(Tyr). The chain is Epoxyqueuosine reductase QueH from Staphylococcus epidermidis (strain ATCC 12228 / FDA PCI 1200).